Consider the following 133-residue polypeptide: p53 and DNA damage-regulated protein 1 (133 aa).

Belongs to the prefoldin subunit beta family. Component of the PAQosome complex which is responsible for the biogenesis of several protein complexes and which consists of R2TP complex members RUVBL1, RUVBL2, RPAP3 and PIH1D1, URI complex members PFDN2, PFDN6, PDRG1, UXT and URI1 as well as ASDURF, POLR2E and DNAAF10/WDR92.

The protein localises to the cytoplasm. In terms of biological role, may play a role in chaperone-mediated protein folding. This is p53 and DNA damage-regulated protein 1 (PDRG1) from Pongo abelii (Sumatran orangutan).